Reading from the N-terminus, the 295-residue chain is MYTGRFAPSPTGLLHIGSLLTAAASYADARSNGGKWLVRMEDLDPPREMPGAASHILHTLEAFGFEWDGEVAYQSRRYALYEETLCRLQTAGLVYPCHCSRKDWQAAAVHGADGFVYNGRCRNPQQRPALQGKQPAWRIRVPDRDIGFSDGIVGGYAQNLARDIGDFVLLRADGYWAYQLAVVADDAEQGVTHIVRGQDLLVSTPRQIYLQQCLGVPTPQYAHLPLLTNAQGQKWSKQTLAPALDLNRREQLLRQVFRYLKLPEAPETDRPAELLDWAVAHWDMGKVPKHAITTP.

L-glutamate-binding positions include 5 to 9 and E41; that span reads RFAPS. Residues 8–18 carry the 'HIGH' region motif; it reads PSPTGLLHIGS. Zn(2+) contacts are provided by C97, C99, Y117, and C121. The L-glutamate site is built by Y178 and R196. The 'KMSKS' region motif lies at 234 to 238; the sequence is KWSKQ. Position 237 (K237) interacts with ATP.

Belongs to the class-I aminoacyl-tRNA synthetase family. GluQ subfamily. Zn(2+) is required as a cofactor.

Its function is as follows. Catalyzes the tRNA-independent activation of glutamate in presence of ATP and the subsequent transfer of glutamate onto a tRNA(Asp). Glutamate is transferred on the 2-amino-5-(4,5-dihydroxy-2-cyclopenten-1-yl) moiety of the queuosine in the wobble position of the QUC anticodon. The chain is Glutamyl-Q tRNA(Asp) synthetase from Neisseria meningitidis serogroup C / serotype 2a (strain ATCC 700532 / DSM 15464 / FAM18).